An 859-amino-acid polypeptide reads, in one-letter code: Homeobox-leucine zipper protein HOX32 (859 aa).

The tract at residues 7 to 31 (AAVHGVGRQDRSSPGGGGAPQVDTG) is disordered. A DNA-binding region (homeobox) is located at residues 29–92 (DTGKYVRYTP…NRRCREKQRK (64 aa)). A coiled-coil region spans residues 100-129 (VNRKLTAMNKLLMEENDRLQKQVSRLVYEN). A compositionally biased stretch (polar residues) spans 146 to 164 (TSCESVVTSGQHHQQQNPA). Residues 146–172 (TSCESVVTSGQHHQQQNPAATRPQRDA) form a disordered region. Residues 171–393 (DANNPAGLLA…LRHIRQIAHE (223 aa)) enclose the START domain.

This sequence belongs to the HD-ZIP homeobox family. Class III subfamily. As to expression, expressed in seedlings, roots, stems, leaf sheaths and blades and panicles.

Its subcellular location is the nucleus. Functionally, probable transcription factor. The polypeptide is Homeobox-leucine zipper protein HOX32 (HOX32) (Oryza sativa subsp. indica (Rice)).